Reading from the N-terminus, the 774-residue chain is Beta-D-xylosidase 1 (774 aa).

Positions 1–30 (MSCYNKALLIGNKVVVILVFLLCLVHSSES) are cleaved as a signal peptide. N131 is a glycosylation site (N-linked (GlcNAc...) asparagine). D296 is an active-site residue. N-linked (GlcNAc...) asparagine glycosylation is present at N658.

The protein belongs to the glycosyl hydrolase 3 family. Expressed in leaves, stems, seedlings, roots, inflorescences, siliques and developing seeds. Expressed in the vasculature of the roots, leaves, flowers and silique. Expressed in tissues undergoing secondary cell wall thickening such as protoxylem, metaxylem, intrafascicular cambium and fibers.

It is found in the secreted. The protein localises to the extracellular space. It localises to the extracellular matrix. The catalysed reaction is Hydrolysis of terminal non-reducing alpha-L-arabinofuranoside residues in alpha-L-arabinosides.. Functionally, involved in pectic arabinan modification in mucilage secretory cells. Also acts as a beta-D-xylosidase during the remodeling of xylans in vascular development. This Arabidopsis thaliana (Mouse-ear cress) protein is Beta-D-xylosidase 1 (BXL1).